Here is a 344-residue protein sequence, read N- to C-terminus: Dihydroorotase (344 aa).

The Zn(2+) site is built by His-13 and His-15. Residues 15–17 (HLR) and Asn-41 contribute to the substrate site. 3 residues coordinate Zn(2+): Lys-98, His-135, and His-173. Lys-98 carries the post-translational modification N6-carboxylysine. His-135 contributes to the substrate binding site. Residue Leu-218 participates in substrate binding. Residue Asp-247 coordinates Zn(2+). Residue Asp-247 is part of the active site. Substrate contacts are provided by His-251 and Ala-263.

This sequence belongs to the metallo-dependent hydrolases superfamily. DHOase family. Class II DHOase subfamily. In terms of assembly, homodimer. Zn(2+) is required as a cofactor.

It catalyses the reaction (S)-dihydroorotate + H2O = N-carbamoyl-L-aspartate + H(+). Its pathway is pyrimidine metabolism; UMP biosynthesis via de novo pathway; (S)-dihydroorotate from bicarbonate: step 3/3. Functionally, catalyzes the reversible cyclization of carbamoyl aspartate to dihydroorotate. The protein is Dihydroorotase of Neisseria meningitidis serogroup C (strain 053442).